Here is a 695-residue protein sequence, read N- to C-terminus: Polyribonucleotide nucleotidyltransferase (695 aa).

Mg(2+) is bound by residues D486 and D492. The KH domain occupies 553–612 (PRIETMQINTSKIATVIGPGGKQIRQIIERSGAQVDINDDGVINIAASTQESINKAKELI). One can recognise an S1 motif domain in the interval 622-690 (GKVYNGRVTS…EKGQLKLSHK (69 aa)).

The protein belongs to the polyribonucleotide nucleotidyltransferase family. Requires Mg(2+) as cofactor.

It is found in the cytoplasm. It carries out the reaction RNA(n+1) + phosphate = RNA(n) + a ribonucleoside 5'-diphosphate. Functionally, involved in mRNA degradation. Catalyzes the phosphorolysis of single-stranded polyribonucleotides processively in the 3'- to 5'-direction. The protein is Polyribonucleotide nucleotidyltransferase of Chlamydia trachomatis serovar L2 (strain ATCC VR-902B / DSM 19102 / 434/Bu).